The sequence spans 557 residues: Probable tRNA-splicing endonuclease subunit tsp-5 (557 aa).

5 disordered regions span residues 1–36, 131–152, 225–252, 370–403, and 514–557; these read MPLD…MMDE, KLTK…DRKL, SVPA…EDDD, PSST…SDSP, and SGGP…GRGN. Residues 131 to 140 show a composition bias toward basic and acidic residues; sequence KLTKRGKEGA. Over residues 370–381 the composition is skewed to low complexity; sequence PSSTSSSASPTA. 2 stretches are compositionally biased toward gly residues: residues 517–527 and 538–549; these read PRRGGGGGGKK and GRGGGRGGGRGG.

Belongs to the SEN54 family. In terms of assembly, tRNA splicing endonuclease is a heterotetramer composed of tsp-2/sen2, tsp-1/sen15, tsp-4/sen34 and tsp-5/sen54. Interacts directly with tsp-2/sen2.

Functionally, non-catalytic subunit of the tRNA-splicing endonuclease complex, a complex responsible for identification and cleavage of the splice sites in pre-tRNA. It cleaves pre-tRNA at the 5' and 3' splice sites to release the intron. The products are an intron and two tRNA half-molecules bearing 2',3' cyclic phosphate and 5'-OH termini. There are no conserved sequences at the splice sites, but the intron is invariably located at the same site in the gene, placing the splice sites an invariant distance from the constant structural features of the tRNA body. May be required to embody the molecular ruler of the complex. This is Probable tRNA-splicing endonuclease subunit tsp-5 (tsp-5) from Neurospora crassa (strain ATCC 24698 / 74-OR23-1A / CBS 708.71 / DSM 1257 / FGSC 987).